A 953-amino-acid polypeptide reads, in one-letter code: Protein translocase subunit SecA (953 aa).

Residues Gln84, 102-106 (GEGKT), and Asp491 contribute to the ATP site. Positions 832–953 (EPEPAPEQPS…RAEAKKNKRR (122 aa)) are disordered. Positions 841-865 (SVPVSVSRSAEPTPDLQAAAEAAAA) are enriched in low complexity. The segment covering 898-907 (KGLDAPEKQR) has biased composition (basic and acidic residues). The segment covering 908–934 (LNYSGPTEQGGVQTTSESAGEQGNGTS) has biased composition (polar residues). The span at 940–953 (RAAARAEAKKNKRR) shows a compositional bias: basic and acidic residues.

It belongs to the SecA family. Monomer and homodimer. Part of the essential Sec protein translocation apparatus which comprises SecA, SecYEG and auxiliary proteins SecDF. Other proteins may also be involved.

It localises to the cell membrane. It is found in the cytoplasm. The enzyme catalyses ATP + H2O + cellular proteinSide 1 = ADP + phosphate + cellular proteinSide 2.. Part of the Sec protein translocase complex. Interacts with the SecYEG preprotein conducting channel. Has a central role in coupling the hydrolysis of ATP to the transfer of proteins into and across the cell membrane, serving as an ATP-driven molecular motor driving the stepwise translocation of polypeptide chains across the membrane. The polypeptide is Protein translocase subunit SecA (Saccharopolyspora erythraea (strain ATCC 11635 / DSM 40517 / JCM 4748 / NBRC 13426 / NCIMB 8594 / NRRL 2338)).